A 363-amino-acid chain; its full sequence is Lovastatin nonaketide synthase, enoyl reductase component lovC (363 aa).

NADP(+) is bound by residues 51–54 (SDTK), 174–177 (STAT), 197–200 (SPHN), tyrosine 215, 262–263 (LN), threonine 280, and 351–352 (LS). Residues 226–272 (TYTKNNLRYALDCITNVESTTFCFAAIGRAGGHYVSLNPFPEHAATR) form a lovB-binding region.

This sequence belongs to the zinc-containing alcohol dehydrogenase family. Each MAT domain from the lovB homodimer binds one lovC molecule to form the final active lovB-lovC megasynthase complex.

The enzyme catalyses holo-[lovastatin nonaketide synthase] + 9 malonyl-CoA + S-adenosyl-L-methionine + 11 NADPH + 19 H(+) = dihydromonacolin L-[lovastatin nonaketide synthase] + S-adenosyl-L-homocysteine + 9 CO2 + 11 NADP(+) + 9 CoA + 6 H2O. Its pathway is polyketide biosynthesis; lovastatin biosynthesis. In terms of biological role, trans-enoyl reductase; part of the gene cluster that mediates the biosynthesis of lovastatin (also known as mevinolin, mevacor or monacolin K), a hypolipidemic inhibitor of (3S)-hydroxymethylglutaryl-coenzyme A (HMG-CoA) reductase (HMGR). The first step in the biosynthesis of lovastatin is the production of dihydromonacolin L acid (DML) by the lovastatin nonaketide synthase lovB and the trans-acting enoyl reductase lovC (called the lovB-lovC megasynthase complex) via condensation of one acetyl-CoA unit and 8 malonyl-CoA units. The formation of the LovB/C complex is essential for the integrity of the catalytic chamber to the complete total synthesis of DML acid. Dihydromonacolin L acid is released from lovB by the thioesterase lovG. Next, dihydromonacolin L acid is oxidized by the dihydromonacolin L monooxygenase lovA twice to form monacolin J acid. The 2-methylbutyrate moiety of lovastatin is synthesized by the lovastatin diketide synthase lovF via condensation of one acetyl-CoA unit and one malonyl-CoA unit. Finally, the covalent attachment of this moiety to monacolin J acid is catalyzed by the transesterase lovD to yield lovastatin. LovD has broad substrate specificity and can also convert monacolin J to simvastatin using alpha-dimethylbutanoyl-S-methyl-3-mercaptopropionate (DMB-S-MMP) as the thioester acyl donor, and can also catalyze the reverse reaction and function as hydrolase in vitro. LovD has much higher activity with LovF-bound 2-methylbutanoate than with free diketide substrates. This is Lovastatin nonaketide synthase, enoyl reductase component lovC from Aspergillus terreus.